A 475-amino-acid polypeptide reads, in one-letter code: tRNA-2-methylthio-N(6)-dimethylallyladenosine synthase (475 aa).

One can recognise an MTTase N-terminal domain in the interval 2–119 (AKLHITTWGC…LPEMINKIRG (118 aa)). C11, C48, C82, C156, C160, and C163 together coordinate [4Fe-4S] cluster. Positions 142–374 (RAEGPTAFVS…QQRINHQAMQ (233 aa)) constitute a Radical SAM core domain. Positions 377–440 (RAMLGTEQRV…TNSLRGEVVR (64 aa)) constitute a TRAM domain.

Belongs to the methylthiotransferase family. MiaB subfamily. Monomer. The cofactor is [4Fe-4S] cluster.

It is found in the cytoplasm. It catalyses the reaction N(6)-dimethylallyladenosine(37) in tRNA + (sulfur carrier)-SH + AH2 + 2 S-adenosyl-L-methionine = 2-methylsulfanyl-N(6)-dimethylallyladenosine(37) in tRNA + (sulfur carrier)-H + 5'-deoxyadenosine + L-methionine + A + S-adenosyl-L-homocysteine + 2 H(+). Catalyzes the methylthiolation of N6-(dimethylallyl)adenosine (i(6)A), leading to the formation of 2-methylthio-N6-(dimethylallyl)adenosine (ms(2)i(6)A) at position 37 in tRNAs that read codons beginning with uridine. In Actinobacillus pleuropneumoniae serotype 3 (strain JL03), this protein is tRNA-2-methylthio-N(6)-dimethylallyladenosine synthase.